A 339-amino-acid chain; its full sequence is UDP-galactose transporter homolog 1 (339 aa).

Helical transmembrane passes span 5–25 (ILKHVFAVGGIYCSFLTWGLL), 43–63 (VPYIVALVQATIAMICGLIYI), 91–111 (AISAPLAAYSLSYVDFLTYML), 138–158 (LVVLLVTVGITIFTLDGHKPS), 171–191 (SSLIGFVLLGSSLFLDGLTNA), 208–228 (HLMFALNFFLIVWNVIYMVLV), 246–268 (ISRYLLAYACCGAIGQCFIFYTL), 273–295 (SLVLVMVTVTRKMFSMILSIIVY), and 301–321 (LWQWVGIVIVFTGVVCESMGK).

It belongs to the nucleotide-sugar transporter family. SLC35B subfamily.

Its subcellular location is the endoplasmic reticulum membrane. In terms of biological role, may be involved in specific transport of UDP-Gal from the cytosol to the Golgi lumen. Involved in the maintenance of optimal conditions for the folding of secretory pathway proteins in the endoplasmic reticulum. The sequence is that of UDP-galactose transporter homolog 1 (HUT1) from Kluyveromyces lactis (strain ATCC 8585 / CBS 2359 / DSM 70799 / NBRC 1267 / NRRL Y-1140 / WM37) (Yeast).